Here is a 395-residue protein sequence, read N- to C-terminus: SWI/SNF and RSC complexes subunit ssr4 (395 aa).

Residues 182 to 230 (KKHIPEGTALSQRETLPNMGSAQMKSQSRTPSFSNVTTSPVPPINSNAT) form a disordered region. The span at 190–230 (ALSQRETLPNMGSAQMKSQSRTPSFSNVTTSPVPPINSNAT) shows a compositional bias: polar residues.

It belongs to the SSR4 family. As to quaternary structure, component of the RSC complex composed of at least arp9, arp42, rsc1, rsc4, rsc7, rsc9, rsc58, sfh1, snf21, ssr1, ssr2, ssr3 and ssr4. The complex interacts with histone and histone variant components of centromeric chromatin. Component of the SWI/SNF global transcription activator complex composed of at least arp9, arp42, snf5, snf22, snf30, sbf59, sol1, ssr1, ssr2, ssr3, ssr4 and tfg3.

The protein resides in the cytoplasm. The protein localises to the nucleus. Its function is as follows. Component of the chromatin structure remodeling complex (RSC), which is involved in transcription regulation and nucleosome positioning. Controls particularly membrane and organelle development genes. Part of the SWI/SNF complex, an ATP-dependent chromatin remodeling complex, required for the positive and negative regulation of gene expression of a large number of genes. It changes chromatin structure by altering DNA-histone contacts within a nucleosome, leading eventually to a change in nucleosome position, thus facilitating or repressing binding of gene-specific transcription factors. In Schizosaccharomyces pombe (strain 972 / ATCC 24843) (Fission yeast), this protein is SWI/SNF and RSC complexes subunit ssr4 (ssr4).